Reading from the N-terminus, the 637-residue chain is Chaperone protein HtpG (637 aa).

Positions 1 to 330 (MATAPASHAF…TEDLPLNISR (330 aa)) are a; substrate-binding. The tract at residues 331 to 551 (ETLQENVVVR…GGASTSSMDR (221 aa)) is b. The interval 552-637 (LLRVLHKDES…GDWYKAVRGL (86 aa)) is c.

The protein belongs to the heat shock protein 90 family. As to quaternary structure, homodimer.

The protein resides in the cytoplasm. In terms of biological role, molecular chaperone. Has ATPase activity. The polypeptide is Chaperone protein HtpG (Nitratidesulfovibrio vulgaris (strain ATCC 29579 / DSM 644 / CCUG 34227 / NCIMB 8303 / VKM B-1760 / Hildenborough) (Desulfovibrio vulgaris)).